The sequence spans 839 residues: uncharacterized protein (839 aa).

3 disordered regions span residues threonine 504–asparagine 611, lysine 627–cysteine 646, and asparagine 682–serine 839. Positions glycine 509 to asparagine 611 are enriched in low complexity. A compositionally biased stretch (basic and acidic residues) spans asparagine 636–cysteine 646. Composition is skewed to low complexity over residues asparagine 689–asparagine 704 and glutamine 713–lysine 753. Positions glutamine 726–serine 764 form a coiled coil. A compositionally biased stretch (basic and acidic residues) spans aspartate 765–arginine 776. The span at glutamate 809–aspartate 823 shows a compositional bias: acidic residues.

This is an uncharacterized protein from Dictyostelium discoideum (Social amoeba).